An 86-amino-acid polypeptide reads, in one-letter code: Large ribosomal subunit protein bL27 (86 aa).

The segment at 1–22 is disordered; sequence MAHKKAGGSSRNGRDSESKRLG.

The protein belongs to the bacterial ribosomal protein bL27 family.

The chain is Large ribosomal subunit protein bL27 from Acidithiobacillus ferrooxidans (strain ATCC 23270 / DSM 14882 / CIP 104768 / NCIMB 8455) (Ferrobacillus ferrooxidans (strain ATCC 23270)).